We begin with the raw amino-acid sequence, 299 residues long: MGTPPVIAVVGPTGSGKSDLAVNLALELDGEVINADAMQFYRGMDIGTAKITPAERRGIPHHLLDILDVTQEASVSDFQDQARRLIGDIHSRGKRAILVGGSGLYVRAALDILEFPGTDPALRRRLEDDLAAHGTATLRARLQDVDPVSAERLSDDRRIIRALEVHELTGRPFSSFMPRREYFQPAVQVGLSVDRAALHERLAARVHAMVDSGLQAEVRRLDGLGLRTGKTACRALGYSQFLQVLDGSATVAEAAESTIVATRQFARRQLTWFRADPRITWIDWQDPDLVARAAGLCSQ.

11-18 (GPTGSGKS) is an ATP binding site. 13-18 (TGSGKS) contributes to the substrate binding site.

This sequence belongs to the IPP transferase family. In terms of assembly, monomer. The cofactor is Mg(2+).

The enzyme catalyses adenosine(37) in tRNA + dimethylallyl diphosphate = N(6)-dimethylallyladenosine(37) in tRNA + diphosphate. Its function is as follows. Catalyzes the transfer of a dimethylallyl group onto the adenine at position 37 in tRNAs that read codons beginning with uridine, leading to the formation of N6-(dimethylallyl)adenosine (i(6)A). The chain is tRNA dimethylallyltransferase from Pseudarthrobacter chlorophenolicus (strain ATCC 700700 / DSM 12829 / CIP 107037 / JCM 12360 / KCTC 9906 / NCIMB 13794 / A6) (Arthrobacter chlorophenolicus).